We begin with the raw amino-acid sequence, 429 residues long: Adenylosuccinate synthetase (429 aa).

GTP is bound by residues 12–18 and 40–42; these read GDEGKGK and GHT. The active-site Proton acceptor is the D13. Residues D13 and G40 each contribute to the Mg(2+) site. IMP-binding positions include 13 to 16, 38 to 41, T128, R142, Q223, T238, and R302; these read DEGK and NAGH. The active-site Proton donor is H41. Substrate is bound at residue 298–304; sequence TTTGRPR. Residues R304, 330–332, and 412–414 contribute to the GTP site; these read SID and SVG.

Belongs to the adenylosuccinate synthetase family. In terms of assembly, homodimer. It depends on Mg(2+) as a cofactor.

The protein resides in the cytoplasm. The enzyme catalyses IMP + L-aspartate + GTP = N(6)-(1,2-dicarboxyethyl)-AMP + GDP + phosphate + 2 H(+). It functions in the pathway purine metabolism; AMP biosynthesis via de novo pathway; AMP from IMP: step 1/2. Its function is as follows. Plays an important role in the de novo pathway of purine nucleotide biosynthesis. Catalyzes the first committed step in the biosynthesis of AMP from IMP. In Bacillus cereus (strain ZK / E33L), this protein is Adenylosuccinate synthetase.